The primary structure comprises 868 residues: Protein translocase subunit SecA (868 aa).

ATP contacts are provided by residues Q87, 105–109, and D500; that span reads GEGKT. C849, C851, C860, and H861 together coordinate Zn(2+).

This sequence belongs to the SecA family. In terms of assembly, monomer and homodimer. Part of the essential Sec protein translocation apparatus which comprises SecA, SecYEG and auxiliary proteins SecDF-YajC and YidC. Requires Zn(2+) as cofactor.

The protein localises to the cell membrane. It is found in the cytoplasm. It carries out the reaction ATP + H2O + cellular proteinSide 1 = ADP + phosphate + cellular proteinSide 2.. Part of the Sec protein translocase complex. Interacts with the SecYEG preprotein conducting channel. Has a central role in coupling the hydrolysis of ATP to the transfer of proteins into and across the cell membrane, serving both as a receptor for the preprotein-SecB complex and as an ATP-driven molecular motor driving the stepwise translocation of polypeptide chains across the membrane. This is Protein translocase subunit SecA from Wolbachia pipientis wMel.